The following is a 106-amino-acid chain: MSANSMSDPRSPNKVLRYKPPPSECNPALDDPTPDYMNLLGMIFSMCGLMLKLKWCAWVAVYCSFISFANSRSSEDTKQMMSSFMLSISAVVMSYLQNPQPMTPPW.

Positions 1–10 (MSANSMSDPR) are enriched in polar residues. Residues 1–29 (MSANSMSDPRSPNKVLRYKPPPSECNPAL) form a disordered region. S2 is subject to N-acetylserine. Over 2–32 (SANSMSDPRSPNKVLRYKPPPSECNPALDDP) the chain is Cytoplasmic. The helical transmembrane segment at 33–51 (TPDYMNLLGMIFSMCGLML) threads the bilayer. A topological domain (lumenal) is located at residue K52. The chain crosses the membrane as a helical span at residues 53–70 (LKWCAWVAVYCSFISFAN). Residues 71–74 (SRSS) lie on the Cytoplasmic side of the membrane. Residues 75-95 (EDTKQMMSSFMLSISAVVMSY) traverse the membrane as a helical segment. Residues 96–106 (LQNPQPMTPPW) are Lumenal-facing.

It belongs to the Asterix family. In terms of assembly, component of the PAT complex, composed of WDR83OS/Asterix and CCDC47. The PAT complex is part of the multi-pass translocon (MPT) complex, composed of three subcomplexes, the GEL complex (composed of RAB5IF/OPTI and TMCO1), the BOS complex (composed of NCLN/Nicalin, NOMO1 and TMEM147) and the PAT complex (composed of WDR83OS/Asterix and CCDC47). The MPT complex associates with the SEC61 complex.

Its subcellular location is the endoplasmic reticulum membrane. Functionally, component of the multi-pass translocon (MPT) complex that mediates insertion of multi-pass membrane proteins into the lipid bilayer of membranes. The MPT complex takes over after the SEC61 complex: following membrane insertion of the first few transmembrane segments of proteins by the SEC61 complex, the MPT complex occludes the lateral gate of the SEC61 complex to promote insertion of subsequent transmembrane regions. Within the MPT complex, the PAT subcomplex sequesters any highly polar regions in the transmembrane domains away from the non-polar membrane environment until they can be buried in the interior of the fully assembled protein. Within the PAT subcomplex, WDR83OS/Asterix binds to and redirects the substrate to a location behind the SEC61 complex. The sequence is that of PAT complex subunit Asterix (WDR83OS) from Sus scrofa (Pig).